A 339-amino-acid chain; its full sequence is Replication factor C subunit 5 (339 aa).

Residue Gly59–Thr66 coordinates ATP.

Belongs to the activator 1 small subunits family. In terms of assembly, subunit of the RFC complex, an heteropentameric complex consisting of a large subunit RFC1 and four small subunits RFC2, RFC3, RFC4 and RFC5; the RFC complex interacts with PCNA. Forms an heterotetrameric complex with RFC2, RFC3 and RFC4; this complex has ATPase activity but is not stimulated by PCNA. The heterotetramer of subunits RFC2, RFC3, RFC4 and RFC5 interacts with RAD17.

Its subcellular location is the nucleus. Subunit of the replication factor C (RFC) complex which acts during elongation of primed DNA templates by DNA polymerases delta and epsilon, and is necessary for ATP-dependent loading of proliferating cell nuclear antigen (PCNA) onto primed DNA. This Mus musculus (Mouse) protein is Replication factor C subunit 5 (Rfc5).